Reading from the N-terminus, the 34-residue chain is Calcitonin-like peptide 2 (34 aa).

An intrachain disulfide couples C2 to C7. A Phenylalanine amide modification is found at F34.

The polypeptide is Calcitonin-like peptide 2 (Odorrana schmackeri (Schmacker's frog)).